The following is a 49-amino-acid chain: Large ribosomal subunit protein bL36 (49 aa).

It belongs to the bacterial ribosomal protein bL36 family.

This chain is Large ribosomal subunit protein bL36, found in Delftia acidovorans (strain DSM 14801 / SPH-1).